Reading from the N-terminus, the 550-residue chain is Arginine--tRNA ligase (550 aa).

Positions 130–140 (ANPTGPIHIGG) match the 'HIGH' region motif.

Belongs to the class-I aminoacyl-tRNA synthetase family. In terms of assembly, monomer.

Its subcellular location is the cytoplasm. The catalysed reaction is tRNA(Arg) + L-arginine + ATP = L-arginyl-tRNA(Arg) + AMP + diphosphate. The sequence is that of Arginine--tRNA ligase from Mycobacterium ulcerans (strain Agy99).